A 390-amino-acid chain; its full sequence is Pyruvate dehydrogenase E1 component subunit alpha-1, mitochondrial (390 aa).

The N-terminal 15 residues, 1-15 (MAAAILLRRVPPARA), are a transit peptide targeting the mitochondrion. Histidine 91, tyrosine 117, arginine 118, glycine 166, valine 168, aspartate 197, glycine 198, alanine 199, asparagine 226, and tyrosine 228 together coordinate pyruvate. Residues tyrosine 117, arginine 118, glycine 166, valine 168, aspartate 197, glycine 198, alanine 199, and asparagine 226 each coordinate thiamine diphosphate. Aspartate 197 contributes to the Mg(2+) binding site. Mg(2+)-binding residues include asparagine 226 and tyrosine 228. Residue histidine 292 coordinates thiamine diphosphate. The disordered stretch occupies residues 293-312 (SMSDPGSTYRTRDEISGVRQ). Over residues 302–312 (RTRDEISGVRQ) the composition is skewed to basic and acidic residues.

In terms of assembly, tetramer of 2 alpha and 2 beta subunits. Thiamine diphosphate serves as cofactor. It depends on Mg(2+) as a cofactor.

Its subcellular location is the mitochondrion matrix. The enzyme catalyses N(6)-[(R)-lipoyl]-L-lysyl-[protein] + pyruvate + H(+) = N(6)-[(R)-S(8)-acetyldihydrolipoyl]-L-lysyl-[protein] + CO2. The pyruvate dehydrogenase complex catalyzes the overall conversion of pyruvate to acetyl-CoA and CO(2). It contains multiple copies of three enzymatic components: pyruvate dehydrogenase (E1), dihydrolipoamide acetyltransferase (E2) and lipoamide dehydrogenase (E3). The protein is Pyruvate dehydrogenase E1 component subunit alpha-1, mitochondrial of Oryza sativa subsp. japonica (Rice).